A 436-amino-acid polypeptide reads, in one-letter code: Trigger factor (436 aa).

Positions glycine 163 to proline 248 constitute a PPIase FKBP-type domain.

Belongs to the FKBP-type PPIase family. Tig subfamily.

Its subcellular location is the cytoplasm. It carries out the reaction [protein]-peptidylproline (omega=180) = [protein]-peptidylproline (omega=0). Its function is as follows. Involved in protein export. Acts as a chaperone by maintaining the newly synthesized protein in an open conformation. Functions as a peptidyl-prolyl cis-trans isomerase. The sequence is that of Trigger factor from Bordetella petrii (strain ATCC BAA-461 / DSM 12804 / CCUG 43448).